The chain runs to 211 residues: MGDNIVLYYFDARGKAELIRLIFAYLGIEYTDKRFGVNGDAFVEFKNFKKEKDTPFEQVPILQIGDLILAQSQAIVRYLSKKYNICGESELNEFYADMIFCGVQDIHYKFNNTNLFKQNETTFLNEDLPKWSGYFEKLLKKNHTNNNNDKYYFVGNNLTYADLAVFNLYDDIETKYPSSLKNFPLLKAHNEFISNLPNIKNYITNRKESVY.

Positions 3 to 87 constitute a GST N-terminal domain; it reads DNIVLYYFDA…YLSKKYNICG (85 aa). Glutathione is bound by residues 58-59, 71-72, aspartate 105, lysine 117, and threonine 121; these read QV and QS. One can recognise a GST C-terminal domain in the interval 89–211; that stretch reads SELNEFYADM…YITNRKESVY (123 aa).

The protein belongs to the GST superfamily. In terms of assembly, homodimer. In the absence of ligands two homodimers may interact to form a tetramer.

The enzyme catalyses RX + glutathione = an S-substituted glutathione + a halide anion + H(+). Its activity is regulated as follows. Inhibited by chloroquine, cibacron blue, ferriprotoporphyrin IX (hemin) and S-hexylglutathione. In terms of biological role, conjugation of reduced glutathione to a wide number of exogenous and endogenous hydrophobic electrophiles. May also function as a storage protein or ligandin for parasitotoxic ferriprotoporphyrin IX (hemin). In Plasmodium falciparum (isolate 3D7), this protein is Glutathione S-transferase.